The chain runs to 380 residues: Protein trichome birefringence-like 38 (380 aa).

A helical; Signal-anchor for type II membrane protein transmembrane segment spans residues 7-29 (SLLLLFLPLLTVTILSGVEQAFA). The GDS motif motif lies at 134–136 (GDS). Positions 357–371 (DCSHWCLPGLPDTWN) match the DCXHWCLPGXXDXWN motif motif.

This sequence belongs to the PC-esterase family. TBL subfamily.

The protein localises to the membrane. May act as a bridging protein that binds pectin and other cell wall polysaccharides. Probably involved in maintaining esterification of pectins. May be involved in the specific O-acetylation of cell wall polymers. The sequence is that of Protein trichome birefringence-like 38 (TBL38) from Arabidopsis thaliana (Mouse-ear cress).